Consider the following 392-residue polypeptide: GDP-mannose transporter (392 aa).

A compositionally biased stretch (basic and acidic residues) spans 1–11 (MDDKKNEDLEM). A disordered region spans residues 1–25 (MDDKKNEDLEMRNFNGRSSPSQRDP). Residues 1-45 (MDDKKNEDLEMRNFNGRSSPSQRDPFLAKPGAAAKRGNSAFDLSN) lie on the Cytoplasmic side of the membrane. The helical transmembrane segment at 46 to 66 (VTNSPGISILAYCLASISMTV) threads the bilayer. Topologically, residues 67–76 (TNKYCVSGSN) are lumenal. A helical transmembrane segment spans residues 77–97 (WNLNFFYLAIQSVVCIIAIII). Residues 98–116 (CKQAGLITNLAPFDTKKAK) are Cytoplasmic-facing. The chain crosses the membrane as a helical span at residues 117 to 139 (TWFPISLLLVGMIYTSTKALQFL). The Lumenal segment spans residues 140–142 (SVP). The helical transmembrane segment at 143-165 (VYTIFKNLTIIVIAYGEVLWFGG) threads the bilayer. Residues 166–171 (SVTPSA) are Cytoplasmic-facing. A helical transmembrane segment spans residues 172-191 (LFSFGLMVLSSVVAAWADIQ). The Lumenal portion of the chain corresponds to 192–210 (HALYGGGAAQSAEAAAALS). The chain crosses the membrane as a helical span at residues 211-231 (TLNAGYAWMGMNVFCTAAYVL). Residues 232–246 (SMRKVIKKMNFKDWD) lie on the Cytoplasmic side of the membrane. A helical membrane pass occupies residues 247 to 267 (TMFYNNLLTIPVLFVCSFIFE). 2 N-linked (GlcNAc...) asparagine glycosylation sites follow: Asn-268 and Asn-273. The Lumenal portion of the chain corresponds to 268 to 285 (NWSSENLTKNFPLETRNN). The chain crosses the membrane as a helical span at residues 286–306 (LILGMIYSGLATIFISYCSAW). Residues 307 to 314 (CIRVTSST) are Cytoplasmic-facing. The chain crosses the membrane as a helical span at residues 315–337 (TYSMVGALNKLPIAVSGLVFFAA). The Lumenal segment spans residues 338–340 (PVT). A helical membrane pass occupies residues 341 to 360 (FGSVSAIFIGFVSGIVYAWA). Topologically, residues 361–392 (KVRQNQSKGNILPTTQPVMSASSQSNRDAAKA) are cytoplasmic. The segment at 373–392 (PTTQPVMSASSQSNRDAAKA) is disordered.

It belongs to the TPT transporter family. SLC35D subfamily. Homooligomer.

The protein resides in the golgi apparatus membrane. Its subcellular location is the cytoplasmic vesicle membrane. The protein localises to the endoplasmic reticulum membrane. Functionally, involved in the import of GDP-mannose from the cytoplasm into the Golgi lumen. In Botryotinia fuckeliana (strain B05.10) (Noble rot fungus), this protein is GDP-mannose transporter (gmt1).